The sequence spans 697 residues: Elongation factor G (697 aa).

A tr-type G domain is found at 10 to 285 (AKTRNIGIMA…GVIDYLPSPL (276 aa)). Residues 19 to 26 (AHIDAGKT), 83 to 87 (DTPGH), and 137 to 140 (NKMD) contribute to the GTP site.

This sequence belongs to the TRAFAC class translation factor GTPase superfamily. Classic translation factor GTPase family. EF-G/EF-2 subfamily.

The protein resides in the cytoplasm. In terms of biological role, catalyzes the GTP-dependent ribosomal translocation step during translation elongation. During this step, the ribosome changes from the pre-translocational (PRE) to the post-translocational (POST) state as the newly formed A-site-bound peptidyl-tRNA and P-site-bound deacylated tRNA move to the P and E sites, respectively. Catalyzes the coordinated movement of the two tRNA molecules, the mRNA and conformational changes in the ribosome. In Lactobacillus acidophilus (strain ATCC 700396 / NCK56 / N2 / NCFM), this protein is Elongation factor G.